The sequence spans 346 residues: Actin-like protein 10 (346 aa).

It belongs to the actin family.

The chain is Actin-like protein 10 (Actl10) from Mus musculus (Mouse).